The primary structure comprises 356 residues: Icosanoyl-CoA 5-desaturase (356 aa).

Residues Leu5 to Ala25 form a helical membrane-spanning segment. A disordered region spans residues Leu38–Asp58. Basic and acidic residues predominate over residues Ile42–Asp58. 2 consecutive transmembrane segments (helical) span residues Asn88–Trp108 and Phe111–Phe131. A Histidine box-1 motif is present at residues His132–His137. Residues His169–His173 carry the Histidine box-2 motif. Residues Ala236 to Phe256 traverse the membrane as a helical segment. A Histidine box-3 motif is present at residues His302–His306.

Belongs to the fatty acid desaturase type 1 family. The cofactor is Fe(2+).

The protein resides in the membrane. The enzyme catalyses eicosanoyl-CoA + 2 Fe(II)-[cytochrome b5] + O2 + 2 H(+) = (5Z)-eicosenoyl-CoA + 2 Fe(III)-[cytochrome b5] + 2 H2O. It functions in the pathway lipid metabolism; monounsaturated fatty acid biosynthesis. Its function is as follows. Desaturase involved in the biosynthesis of (5Z)-icos-5-enoate, an unusual monounsaturated fatty acid that makes up to 60% of the total fatty acids in Limnanthes sp. seed oil. Only acts on saturated fatty acids. This is Icosanoyl-CoA 5-desaturase from Limnanthes douglasii (Douglas' meadowfoam).